Here is a 350-residue protein sequence, read N- to C-terminus: Histidinol-phosphate aminotransferase (350 aa).

The residue at position 207 (K207) is an N6-(pyridoxal phosphate)lysine.

Belongs to the class-II pyridoxal-phosphate-dependent aminotransferase family. Histidinol-phosphate aminotransferase subfamily. Homodimer. It depends on pyridoxal 5'-phosphate as a cofactor.

It catalyses the reaction L-histidinol phosphate + 2-oxoglutarate = 3-(imidazol-4-yl)-2-oxopropyl phosphate + L-glutamate. The protein operates within amino-acid biosynthesis; L-histidine biosynthesis; L-histidine from 5-phospho-alpha-D-ribose 1-diphosphate: step 7/9. The chain is Histidinol-phosphate aminotransferase from Streptococcus thermophilus (strain ATCC BAA-491 / LMD-9).